Reading from the N-terminus, the 76-residue chain is Sec-independent protein translocase protein TatA (76 aa).

A helical membrane pass occupies residues 1–21 (MGGISITQLLIIVAIVVLLFG). Positions 45–76 (DDNKEKDAEFKSLSDDSETTAKTEKAKDKEQA) are disordered.

The protein belongs to the TatA/E family. The Tat system comprises two distinct complexes: a TatABC complex, containing multiple copies of TatA, TatB and TatC subunits, and a separate TatA complex, containing only TatA subunits. Substrates initially bind to the TatABC complex, which probably triggers association of the separate TatA complex to form the active translocon.

The protein localises to the cell inner membrane. Part of the twin-arginine translocation (Tat) system that transports large folded proteins containing a characteristic twin-arginine motif in their signal peptide across membranes. TatA could form the protein-conducting channel of the Tat system. The polypeptide is Sec-independent protein translocase protein TatA (Pasteurella multocida (strain Pm70)).